We begin with the raw amino-acid sequence, 583 residues long: Penicillin-binding protein activator LpoA (583 aa).

The signal sequence occupies residues 1-24; that stretch reads MATILKQKLKTFFVPTAITLLLSA. Residue Cys25 is the site of N-palmitoyl cysteine attachment. The S-diacylglycerol cysteine moiety is linked to residue Cys25.

This sequence belongs to the LpoA family. In terms of assembly, interacts with PBP1a.

It is found in the cell outer membrane. Its function is as follows. Regulator of peptidoglycan synthesis that is essential for the function of penicillin-binding protein 1A (PBP1a). The chain is Penicillin-binding protein activator LpoA from Haemophilus ducreyi (strain 35000HP / ATCC 700724).